Here is a 72-residue protein sequence, read N- to C-terminus: General transcription factor IIH subunit 5 (72 aa).

Belongs to the TFB5 family. Component of the 7-subunit TFIIH core complex composed of XPB/repB, XPD/repD, gtf2h1, gtf2h2, gtf2h3, gtf2h4 and gtf2h5, which is active in NER. The core complex associates with the 3-subunit CDK-activating kinase (CAK) module composed of cycH/cyclin H, cdk7 and mnat1 to form the 10-subunit holoenzyme (holo-TFIIH) active in transcription.

It localises to the nucleus. Its function is as follows. Component of the general transcription and DNA repair factor IIH (TFIIH) core complex, which is involved in general and transcription-coupled nucleotide excision repair (NER) of damaged DNA and, when complexed to CAK, in RNA transcription by RNA polymerase II. In NER, TFIIH acts by opening DNA around the lesion to allow the excision of the damaged oligonucleotide and its replacement by a new DNA fragment. In transcription, TFIIH has an essential role in transcription initiation. When the pre-initiation complex (PIC) has been established, TFIIH is required for promoter opening and promoter escape. Phosphorylation of the C-terminal tail (CTD) of the largest subunit of RNA polymerase II by the kinase module CAK controls the initiation of transcription. The polypeptide is General transcription factor IIH subunit 5 (gtf2h5) (Dictyostelium discoideum (Social amoeba)).